Reading from the N-terminus, the 757-residue chain is 5-methyltetrahydropteroyltriglutamate--homocysteine methyltransferase (757 aa).

Residues 17-20 (RELK) and lysine 115 each bind 5-methyltetrahydropteroyltri-L-glutamate. Residues 430-432 (IGS) and glutamate 483 each bind L-homocysteine. L-methionine contacts are provided by residues 430-432 (IGS) and glutamate 483. 5-methyltetrahydropteroyltri-L-glutamate is bound by residues 514 to 515 (RC) and tryptophan 560. Aspartate 598 contacts L-homocysteine. L-methionine is bound at residue aspartate 598. Glutamate 604 provides a ligand contact to 5-methyltetrahydropteroyltri-L-glutamate. 3 residues coordinate Zn(2+): histidine 640, cysteine 642, and glutamate 664. The Proton donor role is filled by histidine 693. Cysteine 725 lines the Zn(2+) pocket.

Belongs to the vitamin-B12 independent methionine synthase family. The cofactor is Zn(2+).

It carries out the reaction 5-methyltetrahydropteroyltri-L-glutamate + L-homocysteine = tetrahydropteroyltri-L-glutamate + L-methionine. It functions in the pathway amino-acid biosynthesis; L-methionine biosynthesis via de novo pathway; L-methionine from L-homocysteine (MetE route): step 1/1. In terms of biological role, catalyzes the transfer of a methyl group from 5-methyltetrahydrofolate to homocysteine resulting in methionine formation. In Buchnera aphidicola subsp. Schizaphis graminum (strain Sg), this protein is 5-methyltetrahydropteroyltriglutamate--homocysteine methyltransferase.